We begin with the raw amino-acid sequence, 739 residues long: Homeobox protein SIX5 (739 aa).

Low complexity-rich tracts occupy residues 1-24, 34-61, and 74-83; these read MATL…AAAA, QLLQ…AAGA, and PEAASEPPTG. Disordered regions lie at residues 1-84, 251-294, 361-381, and 617-650; these read MATL…PTGL, NRRQ…AAPV, LTGG…SETK, and LSAQ…FPAP. Positions 201 to 260 form a DNA-binding region, homeobox; it reads GEETVYCFKERSRAALKACYRGNRYPTPDEKRRLATLTGLSLTQVSNWFKNRRQRDRTGA. Positions 279-289 are enriched in basic and acidic residues; that stretch reads ESSRSPEDLER. The span at 617-646 shows a compositional bias: low complexity; the sequence is LSAQQPPPAAATTSSTSLPFSPDSPGLLPN.

Belongs to the SIX/Sine oculis homeobox family. As to quaternary structure, probably binds DNA dimer. Interacts with EYA3, and probably EYA1 and EYA2. Expressed in adult but not in fetal eyes. Found in corneal epithelium and endothelium, lens epithelium, ciliary body epithelia, cellular layers of the retina and the sclera.

Its subcellular location is the cytoplasm. It is found in the nucleus. Its function is as follows. Transcription factor that is thought to be involved in regulation of organogenesis. May be involved in determination and maintenance of retina formation. Binds a 5'-GGTGTCAG-3' motif present in the ARE regulatory element of ATP1A1. Binds a 5'-TCA[AG][AG]TTNC-3' motif present in the MEF3 element in the myogenin promoter, and in the IGFBP5 promoter. Thought to be regulated by association with Dach and Eya proteins, and seems to be coactivated by EYA1, EYA2 and EYA3. The chain is Homeobox protein SIX5 (SIX5) from Homo sapiens (Human).